A 138-amino-acid chain; its full sequence is Transcription antitermination protein NusB (138 aa).

Belongs to the NusB family.

In terms of biological role, involved in transcription antitermination. Required for transcription of ribosomal RNA (rRNA) genes. Binds specifically to the boxA antiterminator sequence of the ribosomal RNA (rrn) operons. The polypeptide is Transcription antitermination protein NusB (Serratia proteamaculans (strain 568)).